A 245-amino-acid chain; its full sequence is Ribonuclease 3 (245 aa).

In terms of domain architecture, RNase III spans 19–148 (FKVFQEKIGI…FIGALYLDQG (130 aa)). Glu61 contributes to the Mg(2+) binding site. Asp65 is a catalytic residue. Residues Asp134 and Glu137 each contribute to the Mg(2+) site. The active site involves Glu137. The region spanning 174 to 243 (DYKSQLQELI…AAEALKKLKE (70 aa)) is the DRBM domain.

This sequence belongs to the ribonuclease III family. As to quaternary structure, homodimer. It depends on Mg(2+) as a cofactor.

The protein resides in the cytoplasm. It catalyses the reaction Endonucleolytic cleavage to 5'-phosphomonoester.. Functionally, digests double-stranded RNA. Involved in the processing of primary rRNA transcript to yield the immediate precursors to the large and small rRNAs (23S and 16S). Processes some mRNAs, and tRNAs when they are encoded in the rRNA operon. Processes pre-crRNA and tracrRNA of type II CRISPR loci if present in the organism. This chain is Ribonuclease 3, found in Bacillus cereus (strain ATCC 14579 / DSM 31 / CCUG 7414 / JCM 2152 / NBRC 15305 / NCIMB 9373 / NCTC 2599 / NRRL B-3711).